Here is a 408-residue protein sequence, read N- to C-terminus: Neutral cholesterol ester hydrolase 1 (408 aa).

Topologically, residues 1–4 (MRSS) are cytoplasmic. Residues 5 to 25 (CVLLAALLALAAYYVYIPLPS) form a helical; Signal-anchor for type II membrane protein membrane-spanning segment. Residues 26–408 (AVSDPWKLML…SYIKWLDQNL (383 aa)) are Lumenal-facing. The Involved in the stabilization of the negatively charged intermediate by the formation of the oxyanion hole motif lies at 113-115 (HGG). Residue serine 191 is part of the active site. Asparagine 270 carries an N-linked (GlcNAc...) asparagine glycan. The active site involves aspartate 348. An N-linked (GlcNAc...) asparagine glycan is attached at asparagine 367. Histidine 378 is a catalytic residue. Asparagine 389 is a glycosylation site (N-linked (GlcNAc...) asparagine).

This sequence belongs to the 'GDXG' lipolytic enzyme family. In terms of processing, N-glycosylated. Present in brain, heart, kidney, lung, spinal cord and testis but not liver (at protein level). Expressed in peritoneal macrophages and kidney.

Its subcellular location is the cell membrane. The protein localises to the microsome. The catalysed reaction is a 1-O-alkyl-2-acetyl-sn-glycerol + H2O = a 1-O-alkyl-sn-glycerol + acetate + H(+). It catalyses the reaction 1-O-hexadecyl-2-acetyl-sn-glycerol + H2O = 1-O-hexadecyl-sn-glycerol + acetate + H(+). The enzyme catalyses a cholesterol ester + H2O = cholesterol + a fatty acid + H(+). It carries out the reaction cholesteryl (9Z-octadecenoate) + H2O = cholesterol + (9Z)-octadecenoate + H(+). Inhibited by bulky trifluoromethyl ketones. Its function is as follows. Hydrolyzes 2-acetyl monoalkylglycerol ether (1-O-alkyl-2-acetyl-sn-glycerol), the penultimate precursor of the pathway for de novo synthesis of platelet-activating factor. May be responsible for the hydrolysis of cholesterol esters (such as cholesteryl (9Z-octadecenoate)) in macrophages. Also involved in organ detoxification by hydrolyzing exogenous organophosphorus compounds. The polypeptide is Neutral cholesterol ester hydrolase 1 (Nceh1) (Mus musculus (Mouse)).